Here is a 419-residue protein sequence, read N- to C-terminus: Dual specificity mitogen-activated protein kinase kinase 7 (419 aa).

Residue alanine 2 is modified to N-acetylalanine. Residues 2–30 adopt a coiled-coil conformation; it reads AASSLEQKLSRLEAKLKQENREARRRIDL. Basic and acidic residues predominate over residues 18–30; that stretch reads KQENREARRRIDL. The segment at 18 to 77 is disordered; sequence KQENREARRRIDLNLDISPQRPRPTLQLPLANDGGSRSPSSESSPQHPTPPSRPRHMLGL. Over residues 36-63 the composition is skewed to low complexity; sequence PQRPRPTLQLPLANDGGSRSPSSESSPQ. The tract at residues 37-57 is d Domain; the sequence is QRPRPTLQLPLANDGGSRSPS. Positions 120-380 constitute a Protein kinase domain; that stretch reads LENLGEMGSG…YNKLLEHSFI (261 aa). Residues 126–134 and lysine 149 each bind ATP; that span reads MGSGTCGQV. The active-site Proton acceptor is aspartate 243. A Phosphoserine; by MAP3K modification is found at serine 271. Residue threonine 275 is modified to Phosphothreonine; by MAP3K. Positions 377–400 are DVD domain; that stretch reads HSFIKHYETLEVDVASWFKDVMAK. The residue at position 411 (serine 411) is a Phosphoserine.

This sequence belongs to the protein kinase superfamily. STE Ser/Thr protein kinase family. MAP kinase kinase subfamily. In terms of assembly, interacts with VRK2. Interacts (via its D domain) with its substrates MAPK8/JNK1, MAPK9/JNK2 and MAPK10/JNK3. Interacts (via its DVD domain) with MAP3Ks activators like MAP3K5/ASK1 and MAP3K1/MEKK1. Interacts with MAPK8IP1/JIP1, MAPK8IP2/JIP2 and MAPK8IP3/JIP3 scaffold proteins. Interacts with RASSF7, the interaction promotes phosphorylation. Found in a complex with SH3RF1, RAC1, MAP3K11/MLK3, MAPK8IP1/JIP1 and MAPK8/JNK1. Found in a complex with SH3RF1, RAC2, MAP3K7/TAK1, MAPK8IP1/JIP1, MAPK8/JNK1 and MAPK9/JNK2. It depends on Mg(2+) as a cofactor. In terms of processing, activated by phosphorylation on Ser-271 and Thr-275 by MAP kinase kinase kinases (MAP3Ks).

The protein localises to the nucleus. The protein resides in the cytoplasm. It catalyses the reaction L-seryl-[protein] + ATP = O-phospho-L-seryl-[protein] + ADP + H(+). It carries out the reaction L-threonyl-[protein] + ATP = O-phospho-L-threonyl-[protein] + ADP + H(+). The catalysed reaction is L-tyrosyl-[protein] + ATP = O-phospho-L-tyrosyl-[protein] + ADP + H(+). Its activity is regulated as follows. Activated by phosphorylation by specific MAP kinase kinase kinases such as MAP3K1/MEKK1, MAP3K3/MEKK3, MAP3K11/MLK3 and MAP3K12/DLK. Its function is as follows. Dual specificity protein kinase which acts as an essential component of the MAP kinase signal transduction pathway. Essential component of the stress-activated protein kinase/c-Jun N-terminal kinase (SAP/JNK) signaling pathway. With MAP2K4/MKK4, is the one of the only known kinase to directly activate the stress-activated protein kinase/c-Jun N-terminal kinases MAPK8/JNK1, MAPK9/JNK2 and MAPK10/JNK3. MAP2K4/MKK4 and MAP2K7/MKK7 both activate the JNKs by phosphorylation, but they differ in their preference for the phosphorylation site in the Thr-Pro-Tyr motif. MAP2K4/MKK4 shows preference for phosphorylation of the Tyr residue and MAP2K7/MKK7 for the Thr residue. The monophosphorylation of JNKs on the Thr residue is sufficient to increase JNK activity indicating that MAP2K7/MKK7 is important to trigger JNK activity, while the additional phosphorylation of the Tyr residue by MAP2K4/MKK4 ensures optimal JNK activation. Has a specific role in JNK signal transduction pathway activated by pro-inflammatory cytokines. The MKK/JNK signaling pathway is also involved in mitochondrial death signaling pathway, including the release cytochrome c, leading to apoptosis. Part of a non-canonical MAPK signaling pathway, composed of the upstream MAP3K12 kinase and downstream MAP kinases MAPK1/ERK2 and MAPK3/ERK1, that enhances the AP-1-mediated transcription of APP in response to APOE. This Rattus norvegicus (Rat) protein is Dual specificity mitogen-activated protein kinase kinase 7.